Here is a 365-residue protein sequence, read N- to C-terminus: UPF0718 protein MJ0584 (365 aa).

11 helical membrane-spanning segments follow: residues 6–26 (MSFI…YLNV), 32–52 (LLMA…NFII), 67–87 (VAAV…PLFA), 108–128 (AINV…IGFL), 130–150 (AVFA…IFKS), 174–194 (ITFF…PKLF), 201–221 (LYDG…ILAV), 245–265 (IVFP…AIIP), 282–302 (FIAS…VPII), 308–328 (LGMG…LSIP), and 344–364 (TYLG…GIIL).

Belongs to the UPF0718 family.

It localises to the cell membrane. The protein is UPF0718 protein MJ0584 of Methanocaldococcus jannaschii (strain ATCC 43067 / DSM 2661 / JAL-1 / JCM 10045 / NBRC 100440) (Methanococcus jannaschii).